The chain runs to 545 residues: MNGKRPADPGPARPMKKGKKQVSAEFSDAVTEEILRKQVAEAWSCRTPFSHEAIALDMDPFLHCVIPNFIQSQDFLEGLHKELLSLDFHEKYNDLYKFQQSDDLKNRKEPHISALRKLMFEDFRAWLSKVSGIDLEPTIDMSCAKYEFTDALLCHDDELEGRRIAFILYLVPSWDRDLGGTLDLYDTDEHLQPKQIVKSLIPSWNKLVFFEVSPVSFHQVSEVLSEETSRLSISGWFYGPSLTRPPTYFEPPIPRNPHIPQDHEILYEWINPAYLEMDYQMQIQEEFEERSEILLKEFLKPEKFAEVCEALEKGDVEWKSHGPPNKRFYEKAEENNLPDVLKECMGLFRSEALFLLLSNLTGLKLHFLAPSEDDETEEKGEGETASAAAGTEEGTSRRPSGPENNQVAAGSHSQENGEQADPEAQEEEAKKESSVPMCQGELRRWKTGHYTLVHDNTKTEFALDLFLYCGCEGWEPEYGGFTSYIAKGEDEELLIVNPENNSLALVYRDRETLRFVKHINHRSLEQSKAFPSRSGFWDFAFIYYE.

The disordered stretch occupies residues Met1–Ser23. A Fe2OG dioxygenase domain is found at Pro137 to Gly239. Residues His155 and Asp157 each contribute to the Fe cation site. Tyr169 contributes to the 2-oxoglutarate binding site. Position 218 (His218) interacts with Fe cation. Arg230 lines the 2-oxoglutarate pocket. Residues Ser371 to Gly380 show a composition bias toward acidic residues. The segment at Ser371–Met437 is disordered. The span at Glu383–Glu393 shows a compositional bias: low complexity. Over residues Pro402–Gly417 the composition is skewed to polar residues.

Belongs to the TPA1 family. In terms of assembly, monomer. Fe(2+) serves as cofactor. The cofactor is L-ascorbate.

The protein resides in the cytoplasm. It is found in the nucleus. It carries out the reaction [ribosomal protein uS12]-L-proline + 2-oxoglutarate + O2 = [ribosomal protein uS12]-(3S)-3-hydroxy-L-proline + succinate + CO2. In terms of biological role, prolyl 3-hydroxylase that catalyzes 3-hydroxylation of 'Pro-62' of small ribosomal subunit uS12 (RPS23), thereby regulating protein translation termination efficiency. Involved in stress granule formation. This is Prolyl 3-hydroxylase OGFOD1 (Ogfod1) from Mus musculus (Mouse).